A 104-amino-acid polypeptide reads, in one-letter code: UPF0145 protein NP_2600A (104 aa).

The protein belongs to the UPF0145 family.

The polypeptide is UPF0145 protein NP_2600A (Natronomonas pharaonis (strain ATCC 35678 / DSM 2160 / CIP 103997 / JCM 8858 / NBRC 14720 / NCIMB 2260 / Gabara) (Halobacterium pharaonis)).